Consider the following 89-residue polypeptide: Small ribosomal subunit protein uS15 (89 aa).

Belongs to the universal ribosomal protein uS15 family. In terms of assembly, part of the 30S ribosomal subunit. Forms a bridge to the 50S subunit in the 70S ribosome, contacting the 23S rRNA.

One of the primary rRNA binding proteins, it binds directly to 16S rRNA where it helps nucleate assembly of the platform of the 30S subunit by binding and bridging several RNA helices of the 16S rRNA. In terms of biological role, forms an intersubunit bridge (bridge B4) with the 23S rRNA of the 50S subunit in the ribosome. This is Small ribosomal subunit protein uS15 from Roseiflexus castenholzii (strain DSM 13941 / HLO8).